We begin with the raw amino-acid sequence, 471 residues long: ATP synthase subunit beta (471 aa).

158–165 provides a ligand contact to ATP; the sequence is GGAGCGKT.

It belongs to the ATPase alpha/beta chains family. As to quaternary structure, F-type ATPases have 2 components, CF(1) - the catalytic core - and CF(0) - the membrane proton channel. CF(1) has five subunits: alpha(3), beta(3), gamma(1), delta(1), epsilon(1). CF(0) has three main subunits: a(1), b(2) and c(9-12). The alpha and beta chains form an alternating ring which encloses part of the gamma chain. CF(1) is attached to CF(0) by a central stalk formed by the gamma and epsilon chains, while a peripheral stalk is formed by the delta and b chains.

The protein resides in the cell inner membrane. The catalysed reaction is ATP + H2O + 4 H(+)(in) = ADP + phosphate + 5 H(+)(out). In terms of biological role, produces ATP from ADP in the presence of a proton gradient across the membrane. The catalytic sites are hosted primarily by the beta subunits. This is ATP synthase subunit beta from Desulfotalea psychrophila (strain LSv54 / DSM 12343).